The sequence spans 426 residues: Enolase (426 aa).

Gln-165 is a (2R)-2-phosphoglycerate binding site. The active-site Proton donor is the Glu-209. Mg(2+) contacts are provided by Asp-244, Glu-287, and Asp-313. 4 residues coordinate (2R)-2-phosphoglycerate: Lys-338, Arg-367, Ser-368, and Lys-389. The Proton acceptor role is filled by Lys-338.

This sequence belongs to the enolase family. Requires Mg(2+) as cofactor.

Its subcellular location is the cytoplasm. It localises to the secreted. The protein localises to the cell surface. It catalyses the reaction (2R)-2-phosphoglycerate = phosphoenolpyruvate + H2O. It participates in carbohydrate degradation; glycolysis; pyruvate from D-glyceraldehyde 3-phosphate: step 4/5. Its function is as follows. Catalyzes the reversible conversion of 2-phosphoglycerate (2-PG) into phosphoenolpyruvate (PEP). It is essential for the degradation of carbohydrates via glycolysis. This Methanococcus maripaludis (strain C7 / ATCC BAA-1331) protein is Enolase.